Reading from the N-terminus, the 1161-residue chain is Nuclear receptor-interacting protein 1 (1161 aa).

The interval 1 to 416 (MTHGEELGSD…FESSTPTTID (416 aa)) is interaction with ZNF366. The LXXLL motif 1 signature appears at 21–25 (LEGLL). The segment at 34–68 (GTAINKKSAGHKEEDQNFNLSGSAFPSCQSNGPTV) is disordered. Polar residues predominate over residues 50–68 (NFNLSGSAFPSCQSNGPTV). A repression domain 1 region spans residues 78–335 (MLHLKKARLL…LNGQARALPA (258 aa)). Ser104 is modified (phosphoserine). Lys111 carries the N6-acetyllysine; alternate modification. Residue Lys111 forms a Glycyl lysine isopeptide (Lys-Gly) (interchain with G-Cter in SUMO2); alternate linkage. The LXXLL motif 2 signature appears at 133–137 (LASLL). Lys158 carries the post-translational modification N6-acetyllysine. A Glycyl lysine isopeptide (Lys-Gly) (interchain with G-Cter in SUMO2) cross-link involves residue Lys170. The short motif at 185–189 (LKTLL) is the LXXLL motif 3 element. Residues Lys195 and Lys198 each participate in a glycyl lysine isopeptide (Lys-Gly) (interchain with G-Cter in SUMO2) cross-link. Thr207 carries the phosphothreonine modification. Phosphoserine is present on Ser218. Residues 267–271 (LALLL) carry the LXXLL motif 4 motif. Lys287 and Lys311 each carry N6-acetyllysine. At Ser358 the chain carries Phosphoserine. Lys374 participates in a covalent cross-link: Glycyl lysine isopeptide (Lys-Gly) (interchain with G-Cter in SUMO2). The residue at position 380 (Ser380) is a Phosphoserine. An LXXLL motif 5 motif is present at residues 382–386 (LLHLL). The disordered stretch occupies residues 393–436 (TPMNGHSQNERASSFESSTPTTIDEYSDNNPSFTDDSSGDESSY). The repression domain 2 stretch occupies residues 411–701 (TPTTIDEYSD…PAGPEPGLPG (291 aa)). The segment at 432–473 (DESSYSNCVPIDLSCKHRIEKPEAERPVSLENLTQSLLNTWD) is required for targeting to small nuclear foci. A CTBP-binding; principal site motif is present at residues 441–447 (PIDLSCK). Residues Lys447 and Lys482 each carry the N6-acetyllysine modification. Ser488 carries the phosphoserine modification. The LXXLL motif 6 motif lies at 501–505 (LLQLL). Lys509 is covalently cross-linked (Glycyl lysine isopeptide (Lys-Gly) (interchain with G-Cter in SUMO2)). The span at 517 to 552 (NASPQDIHSDGTKFSPQNYTRTSVIESPSTNRTTPV) shows a compositional bias: polar residues. The disordered stretch occupies residues 517-559 (NASPQDIHSDGTKFSPQNYTRTSVIESPSTNRTTPVSTPPLYT). Position 519 is a phosphoserine (Ser519). Lys529 is subject to N6-acetyllysine. Phosphoserine is present on residues Ser531, Ser543, and Ser565. The short motif at 566–570 (PINLS) is the CTBP-binding element. Disordered stretches follow at residues 604–623 (TKGK…AQNS), 639–702 (GLQS…LPGC), and 717–747 (LLGN…ERAA). Lys607 carries the N6-acetyllysine modification. Phosphoserine is present on Ser672. The short motif at 714–718 (LQLLL) is the LXXLL motif 7 element. The span at 724 to 747 (GKNEKKEKTPARDEAPQEHSERAA) shows a compositional bias: basic and acidic residues. The segment at 736–886 (DEAPQEHSER…TAVDTANHHS (151 aa)) is repression domain 3. The segment at 754–1161 (VKIKSEPCDD…NALTIKKESE (408 aa)) is interaction with ZNF366. Residues Lys757 and Lys803 each participate in a glycyl lysine isopeptide (Lys-Gly) (interchain with G-Cter in SUMO2) cross-link. Ser808 carries the post-translational modification Phosphoserine. The short motif at 820–824 (LSRLL) is the LXXLL motif 8 element. The disordered stretch occupies residues 829–848 (ESYPADEQDKSHRNSELPTL). Residues Lys851 and Lys902 each participate in a glycyl lysine isopeptide (Lys-Gly) (interchain with G-Cter in SUMO2) cross-link. N6-acetyllysine; alternate is present on Lys932. Lys932 participates in a covalent cross-link: Glycyl lysine isopeptide (Lys-Gly) (interchain with G-Cter in SUMO2); alternate. Positions 937–941 (LKQLL) match the LXXLL motif 9 motif. The CTBP-binding motif lies at 947–951 (VRDLS). The span at 950–962 (LSPHRSDSVPDTK) shows a compositional bias: basic and acidic residues. The tract at residues 950-976 (LSPHRSDSVPDTKKKGHKNNAPGSKPE) is disordered. Ser1003 carries the post-translational modification Phosphoserine. The tract at residues 1063-1076 (LTKTNPILYYMLQK) is ligand-dependent nuclear receptor binding. Residues Lys1108, Lys1118, and Lys1157 each participate in a glycyl lysine isopeptide (Lys-Gly) (interchain with G-Cter in SUMO2) cross-link. The interval 1121–1161 (FFNLRSPYNSHMGNNASRPHSTNGEVYGLLGNALTIKKESE) is repression domain 4.

As to quaternary structure, interacts with CTBP1, CTBP2, ERS1, HDAC1, HDAC2, HDAC5, HDAC6, NR2C2, NR3C1, NR3C2, YWHAH, JUN and FOS. Found in a complex with both NR3C1 and YWHAH. Interacts with NR2C1 (sumoylated form and via the ligand-binding domain); the interaction results in promoting the repressor activity of NR2C1. Interacts with RARA and RXRB homodimers and RARA/RXRB heterodimers in the presence of ligand. Interacts with HDAC1 and HDAC3 via its N-terminal domain. Interacts with ZNF366. Interacts with RORA. In terms of processing, acetylation abolishes interaction with CTBP1. Phosphorylation enhances interaction with YWHAH. Acetylation regulates its nuclear translocation and corepressive activity. Expressed in the embryonic placenta. In the adult, expression is strong in the testis and brain. Also expressed at a high level in the white adipose tissue. Expressed constantly but at a weaker level in the adult heart, lung, stomach and kidney. Expressed moderately in the skeletal muscle. Expressed at a low level in the adult spleen, liver and brown adipose tissue. Expressed in the ovary at a high level in granulosa cells and at a lower level in the thecal and interstitial compartments.

It is found in the nucleus. In terms of biological role, modulates transcriptional repression by nuclear hormone receptors such as NR2C1, thyroid hormone receptor and retinoic acid receptor/RARA. Essential for cumulus expansion and follicle rupture during ovulation. Also controls the balance between fat accumulation and energy expenditure. Positive regulator of the circadian clock gene expression: stimulates transcription of BMAL1, CLOCK and CRY1 by acting as a coactivator for RORA and RORC. Involved in the regulation of ovarian function. Plays a role in renal development. In Mus musculus (Mouse), this protein is Nuclear receptor-interacting protein 1.